Reading from the N-terminus, the 506-residue chain is 26S proteasome non-ATPase regulatory subunit 5 (506 aa).

Belongs to the proteasome subunit S5B/HSM3 family. As to quaternary structure, interacts with PI31; this interaction is increased by PI31 ADP-ribosylation. Interacts with Rpt2.

Its function is as follows. Acts as a chaperone during the assembly of the 26S proteasome. The protein is 26S proteasome non-ATPase regulatory subunit 5 of Drosophila melanogaster (Fruit fly).